Consider the following 354-residue polypeptide: Anthranilate phosphoribosyltransferase (354 aa).

Residues Gly94, 97–98 (GD), Thr102, 104–107 (NIST), 122–130 (KHGNRAASS), and Ser134 each bind 5-phospho-alpha-D-ribose 1-diphosphate. Gly94 serves as a coordination point for anthranilate. Residue Ser106 participates in Mg(2+) binding. Asn125 lines the anthranilate pocket. Arg180 is an anthranilate binding site. Residues Asp238 and Glu239 each contribute to the Mg(2+) site.

Belongs to the anthranilate phosphoribosyltransferase family. In terms of assembly, homodimer. Mg(2+) serves as cofactor.

The enzyme catalyses N-(5-phospho-beta-D-ribosyl)anthranilate + diphosphate = 5-phospho-alpha-D-ribose 1-diphosphate + anthranilate. It participates in amino-acid biosynthesis; L-tryptophan biosynthesis; L-tryptophan from chorismate: step 2/5. Its function is as follows. Catalyzes the transfer of the phosphoribosyl group of 5-phosphorylribose-1-pyrophosphate (PRPP) to anthranilate to yield N-(5'-phosphoribosyl)-anthranilate (PRA). This chain is Anthranilate phosphoribosyltransferase, found in Streptomyces avermitilis (strain ATCC 31267 / DSM 46492 / JCM 5070 / NBRC 14893 / NCIMB 12804 / NRRL 8165 / MA-4680).